The sequence spans 544 residues: Probable protein kinase UbiB (544 aa).

Positions 123 to 501 (DFDIEPLASA…KRQQATGKFL (379 aa)) constitute a Protein kinase domain. ATP contacts are provided by residues 129–137 (LASASIAQV) and K152. The active-site Proton acceptor is D287. A helical membrane pass occupies residues 500-520 (FLFGVGATLVVCSAILVSSPY).

This sequence belongs to the ABC1 family. UbiB subfamily.

It is found in the cell inner membrane. It participates in cofactor biosynthesis; ubiquinone biosynthesis [regulation]. In terms of biological role, is probably a protein kinase regulator of UbiI activity which is involved in aerobic coenzyme Q (ubiquinone) biosynthesis. The chain is Probable protein kinase UbiB from Vibrio atlanticus (strain LGP32) (Vibrio splendidus (strain Mel32)).